We begin with the raw amino-acid sequence, 145 residues long: Large ribosomal subunit protein uL15 (145 aa).

The segment at 1–43 (MRLNTIKPGAGSKSAAKRVGRGIGSGLGKTCGRGHKGQKSRAG) is disordered. The segment covering 21-31 (RGIGSGLGKTC) has biased composition (gly residues).

It belongs to the universal ribosomal protein uL15 family. As to quaternary structure, part of the 50S ribosomal subunit.

Binds to the 23S rRNA. This Aromatoleum aromaticum (strain DSM 19018 / LMG 30748 / EbN1) (Azoarcus sp. (strain EbN1)) protein is Large ribosomal subunit protein uL15.